Here is a 428-residue protein sequence, read N- to C-terminus: Adenylosuccinate synthetase (428 aa).

GTP contacts are provided by residues 12–18 and 40–42; these read GDEGKGK and GHT. Catalysis depends on aspartate 13, which acts as the Proton acceptor. Mg(2+) contacts are provided by aspartate 13 and glycine 40. IMP-binding positions include 13 to 16, 38 to 41, threonine 128, arginine 142, glutamine 223, threonine 238, and arginine 302; these read DEGK and NAGH. Histidine 41 (proton donor) is an active-site residue. Residue 298–304 coordinates substrate; it reads VTTGRPR. GTP is bound by residues arginine 304, 330 to 332, and 412 to 414; these read KLD and GTG.

It belongs to the adenylosuccinate synthetase family. Homodimer. It depends on Mg(2+) as a cofactor.

It is found in the cytoplasm. It catalyses the reaction IMP + L-aspartate + GTP = N(6)-(1,2-dicarboxyethyl)-AMP + GDP + phosphate + 2 H(+). It participates in purine metabolism; AMP biosynthesis via de novo pathway; AMP from IMP: step 1/2. Functionally, plays an important role in the de novo pathway of purine nucleotide biosynthesis. Catalyzes the first committed step in the biosynthesis of AMP from IMP. The polypeptide is Adenylosuccinate synthetase (Bifidobacterium adolescentis (strain ATCC 15703 / DSM 20083 / NCTC 11814 / E194a)).